A 389-amino-acid polypeptide reads, in one-letter code: 2-aminoethylphosphonate--pyruvate transaminase 1 (389 aa).

Lys-196 carries the post-translational modification N6-(pyridoxal phosphate)lysine.

This sequence belongs to the class-V pyridoxal-phosphate-dependent aminotransferase family. PhnW subfamily. As to quaternary structure, homodimer. It depends on pyridoxal 5'-phosphate as a cofactor.

The enzyme catalyses (2-aminoethyl)phosphonate + pyruvate = phosphonoacetaldehyde + L-alanine. Its function is as follows. Involved in phosphonate degradation. This Paraburkholderia xenovorans (strain LB400) protein is 2-aminoethylphosphonate--pyruvate transaminase 1.